A 374-amino-acid chain; its full sequence is All-trans-retinol dehydrogenase [NAD(+)] ADH7 (374 aa).

Residue Met-1 is modified to N-acetylmethionine. Cys-47, His-68, Cys-98, Cys-101, Cys-104, Cys-112, and Cys-174 together coordinate Zn(2+). NAD(+) contacts are provided by residues Gly-199–Gly-204, Asp-223, Lys-228, Val-292–Ala-294, and Arg-369.

This sequence belongs to the zinc-containing alcohol dehydrogenase family. Class-IV subfamily. Homodimer. The cofactor is Zn(2+). In terms of tissue distribution, preferentially expressed in stomach.

The protein resides in the cytoplasm. The catalysed reaction is a primary alcohol + NAD(+) = an aldehyde + NADH + H(+). The enzyme catalyses 10-hydroxydecanoate + NAD(+) = 10-oxodecanoate + NADH + H(+). It carries out the reaction all-trans-retinol + NAD(+) = all-trans-retinal + NADH + H(+). It catalyses the reaction 9-cis-retinol + NAD(+) = 9-cis-retinal + NADH + H(+). The catalysed reaction is all-trans-3,4-didehydroretinol + NAD(+) = all-trans-3,4-didehydroretinal + NADH + H(+). The enzyme catalyses all-trans-4-hydroxyretinol + NAD(+) = all-trans-4-hydroxyretinal + NADH + H(+). It carries out the reaction all-trans-4-oxoretinol + NAD(+) = all-trans-4-oxoretinal + NADH + H(+). It catalyses the reaction 12-hydroxydodecanoate + NAD(+) = 12-oxododecanoate + NADH + H(+). The catalysed reaction is 16-hydroxyhexadecanoate + NAD(+) = 16-oxohexadecanoate + NADH + H(+). The enzyme catalyses hexan-1-ol + NAD(+) = hexanal + NADH + H(+). It carries out the reaction (E)-hex-2-en-1-ol + NAD(+) = (E)-hex-2-enal + NADH + H(+). It catalyses the reaction (E)-4-hydroxynon-2-en-1-ol + NAD(+) = (E)-4-hydroxynon-2-enal + NADH + H(+). Its activity is regulated as follows. Retinol oxidation is inhibited by the detergent Tween 80. Ethanol inhibits both all-trans-retinol and 9-cis-retinol oxidation. 13-cis-retinol is an effective competitive inhibitor of the 9-cis-retinol oxidation. All-trans-retinoic acid is a powerful inhibitor of all-trans-retinol oxidation. 13-cis-retinoic acid is a powerful inhibitor of all-trans-retinol oxidation. Cimetidine and ranitidine inhibited ethanol oxidation. Functionally, catalyzes the NAD-dependent oxidation of all-trans-retinol, alcohol, aldehyde and omega-hydroxy fatty acids and their derivatives. Oxidizes preferentially all trans-retinol, all-trans-4-hydroxyretinol, 9-cis-retinol, 2-hexenol, and long chain omega-hydroxy fatty acids such as juniperic acid. In vitro can also catalyze the NADH-dependent reduction of all-trans-retinal and aldehydes and their derivatives. Reduces preferentially all trans-retinal, all-trans-4-oxoretinal and hexanal. Catalyzes in the oxidative direction with higher efficiency. Therefore may participate in retinoid metabolism, fatty acid omega-oxidation, and elimination of cytotoxic aldehydes produced by lipid peroxidation. This is All-trans-retinol dehydrogenase [NAD(+)] ADH7 (Adh7) from Rattus norvegicus (Rat).